A 591-amino-acid polypeptide reads, in one-letter code: V-type ATP synthase alpha chain (591 aa).

232-239 (GPFGAGKT) lines the ATP pocket.

This sequence belongs to the ATPase alpha/beta chains family.

The enzyme catalyses ATP + H2O + 4 H(+)(in) = ADP + phosphate + 5 H(+)(out). Produces ATP from ADP in the presence of a proton gradient across the membrane. The V-type alpha chain is a catalytic subunit. This chain is V-type ATP synthase alpha chain, found in Clostridium perfringens (strain SM101 / Type A).